A 311-amino-acid chain; its full sequence is tRNA-cytidine(32) 2-sulfurtransferase (311 aa).

A PP-loop motif motif is present at residues 47-52 (SGGKDS). [4Fe-4S] cluster contacts are provided by Cys122, Cys125, and Cys213.

The protein belongs to the TtcA family. In terms of assembly, homodimer. The cofactor is Mg(2+). It depends on [4Fe-4S] cluster as a cofactor.

Its subcellular location is the cytoplasm. The enzyme catalyses cytidine(32) in tRNA + S-sulfanyl-L-cysteinyl-[cysteine desulfurase] + AH2 + ATP = 2-thiocytidine(32) in tRNA + L-cysteinyl-[cysteine desulfurase] + A + AMP + diphosphate + H(+). Its pathway is tRNA modification. Catalyzes the ATP-dependent 2-thiolation of cytidine in position 32 of tRNA, to form 2-thiocytidine (s(2)C32). The sulfur atoms are provided by the cysteine/cysteine desulfurase (IscS) system. The sequence is that of tRNA-cytidine(32) 2-sulfurtransferase from Escherichia coli (strain 55989 / EAEC).